The primary structure comprises 161 residues: Nucleotide-binding protein Shal_3198 (161 aa).

The protein belongs to the YajQ family.

Its function is as follows. Nucleotide-binding protein. The chain is Nucleotide-binding protein Shal_3198 from Shewanella halifaxensis (strain HAW-EB4).